The following is a 489-amino-acid chain: Probable anthranilate synthase component 1 (489 aa).

Residues S54 and 262 to 264 (PYM) each bind L-tryptophan. 297–298 (GT) contacts chorismate. E324 is a Mg(2+) binding site. 2 positions are modified to phosphoserine: S390 and S392. Residues Y412, R433, 447–449 (GGG), and G449 each bind chorismate. Residue E462 coordinates Mg(2+). A Phosphoserine modification is found at S488.

Belongs to the anthranilate synthase component I family. As to quaternary structure, tetramer of two components I and two components II. Mg(2+) serves as cofactor.

The catalysed reaction is chorismate + L-glutamine = anthranilate + pyruvate + L-glutamate + H(+). The protein operates within amino-acid biosynthesis; L-tryptophan biosynthesis; L-tryptophan from chorismate: step 1/5. In Schizosaccharomyces pombe (strain 972 / ATCC 24843) (Fission yeast), this protein is Probable anthranilate synthase component 1 (trp3).